The primary structure comprises 78 residues: Protein FAM240B (78 aa).

The protein belongs to the FAM240 family.

This is Protein FAM240B from Homo sapiens (Human).